The following is a 139-amino-acid chain: Putative nickel-responsive regulator (139 aa).

Residues His79, His90, His92, and Cys98 each coordinate Ni(2+).

This sequence belongs to the transcriptional regulatory CopG/NikR family. Ni(2+) is required as a cofactor.

Transcriptional regulator. This Pelobacter propionicus (strain DSM 2379 / NBRC 103807 / OttBd1) protein is Putative nickel-responsive regulator.